We begin with the raw amino-acid sequence, 341 residues long: Phosphate acyltransferase (341 aa).

Belongs to the PlsX family. In terms of assembly, homodimer. Probably interacts with PlsY.

It localises to the cytoplasm. The enzyme catalyses a fatty acyl-[ACP] + phosphate = an acyl phosphate + holo-[ACP]. The protein operates within lipid metabolism; phospholipid metabolism. In terms of biological role, catalyzes the reversible formation of acyl-phosphate (acyl-PO(4)) from acyl-[acyl-carrier-protein] (acyl-ACP). This enzyme utilizes acyl-ACP as fatty acyl donor, but not acyl-CoA. The sequence is that of Phosphate acyltransferase from Vibrio parahaemolyticus serotype O3:K6 (strain RIMD 2210633).